The primary structure comprises 364 residues: Histidinol-phosphate aminotransferase (364 aa).

Residue lysine 224 is modified to N6-(pyridoxal phosphate)lysine.

This sequence belongs to the class-II pyridoxal-phosphate-dependent aminotransferase family. Histidinol-phosphate aminotransferase subfamily. Homodimer. Pyridoxal 5'-phosphate is required as a cofactor.

It carries out the reaction L-histidinol phosphate + 2-oxoglutarate = 3-(imidazol-4-yl)-2-oxopropyl phosphate + L-glutamate. It participates in amino-acid biosynthesis; L-histidine biosynthesis; L-histidine from 5-phospho-alpha-D-ribose 1-diphosphate: step 7/9. In Anaeromyxobacter sp. (strain Fw109-5), this protein is Histidinol-phosphate aminotransferase.